Consider the following 561-residue polypeptide: Solute carrier family 41 member 2 (561 aa).

The Extracellular segment spans residues 1–150 (MTANTGEPYK…KESSIAMALQ (150 aa)). The chain crosses the membrane as a helical span at residues 151-171 (ILVPFLLAGFGTVSAGMVLDI). Residues 172-183 (VQHWDVFKNLTE) are Cytoplasmic-facing. Residues 184–204 (VFILVPALLGLKGNLEMTLAS) traverse the membrane as a helical segment. Residues 205–233 (RLSTAVNVGKMDSPIEKWNLIIGNLALKQ) lie on the Extracellular side of the membrane. A helical membrane pass occupies residues 234–254 (VQATVVGFLAAVFAVILGWIP). Residues 255–270 (DGKYQLDHAILLCSSS) are Cytoplasmic-facing. A helical transmembrane segment spans residues 271-291 (VATAFIASLLQGIIMVGVIVG). The Extracellular segment spans residues 292-301 (SKKTGINPDN). The helical transmembrane segment at 302 to 322 (VATPIAASFGDLITLAILAWI) threads the bilayer. The Cytoplasmic segment spans residues 323 to 333 (SQGLYNCLGSY). Residues 334-354 (AFVSPLVGVFFLAMTPIWIVI) form a helical membrane-spanning segment. The Extracellular portion of the chain corresponds to 355–364 (ASKHPATRTV). Residues 365–385 (LHSGWEPVITAMLISSIGGLI) form a helical membrane-spanning segment. Residues 386–394 (LDTTVSDPN) are Cytoplasmic-facing. Residues 395–415 (LVGIVVYTPVINGIGGNLVAI) traverse the membrane as a helical segment. Over 416–457 (QASRISTYLHLYSIPGELPEDAKGCYHPCRTFCGTGVNNKSA) the chain is Extracellular. The helical transmembrane segment at 458–478 (QVLLSLVIPGHLIFLYTIYLM) threads the bilayer. Over 479–487 (KSGHTSLTP) the chain is Cytoplasmic. The helical transmembrane segment at 488-508 (IFVAVYLLAALLQVFALLWIA) threads the bilayer. The Extracellular segment spans residues 509–531 (DWMVHHIWRKGKDPDSFSIPYLT). Residues 532 to 552 (ALGDLLGTALLAISFHILWII) form a helical membrane-spanning segment. Residues 553-561 (GDRDGDVGD) lie on the Cytoplasmic side of the membrane.

It belongs to the SLC41A transporter family.

The protein resides in the cell membrane. The catalysed reaction is Mg(2+)(in) = Mg(2+)(out). It carries out the reaction Mn(2+)(in) = Mn(2+)(out). The enzyme catalyses Co(2+)(in) = Co(2+)(out). It catalyses the reaction Ni(2+)(in) = Ni(2+)(out). The catalysed reaction is Fe(2+)(in) = Fe(2+)(out). Functionally, acts as a plasma-membrane magnesium transporter. Can also mediate the transport of other divalent metal cations in an order of Ba(2+) &gt; Ni(2+) &gt; Co(2+) &gt; Fe(2+) &gt; Mn(2+). This Xenopus laevis (African clawed frog) protein is Solute carrier family 41 member 2 (slc41a2).